The following is a 234-amino-acid chain: UstYa family oxidase phomYd' (234 aa).

The disordered stretch occupies residues 1 to 26; that stretch reads MEKFFSPSRHNYADLSPTDVPASEES. A helical transmembrane segment spans residues 47–69; that stretch reads VLVNRLLAASTVALVMVSLWLGW. The short motif at 151–155 is the HXXHC 1 element; that stretch reads HWDHC. A glycan (N-linked (GlcNAc...) asparagine) is linked at N208.

The protein belongs to the ustYa family.

Its subcellular location is the membrane. It functions in the pathway mycotoxin biosynthesis. UstYa family oxidase; part of the gene cluster that mediates the biosynthesis of the phomopsins, a group of hexapeptide mycotoxins which infects lupins and causes lupinosis disease in livestock. Within the pathway, phomYd' catalyzes the desaturation of the Asp moiety into 2,3-dehydroaspartic acid (dAsp). The pathway starts with the processing of the precursor phomA' by several endopeptidases including kexin proteases as well as the cluster-specific S41 family peptidase phomP1 and the oligopeptidase phomG' to produce 10 identical copies of the hexapeptide Tyr-Val-Ile-Pro-Ile-Asp. After being excised from the precursor peptide, the core peptides are cyclized and modified post-translationally by enzymes encoded within the gene cluster. The timing and order of proteolysis of the phomA' precursor and PTMs are still unknown. Two tyrosinase-like enzymes, phomQ1' and phomQ2, catalyze the chlorination and hydroxylation of Tyr, respectively. PhomYb, is proposed to be involved in the construction of the macrocyclic structure. The other 4 ustYa family proteins may be involved in PTMs that generate the unique structure of phomopsin A. PhomYa' is required for the hydroxylation of C-beta of Tyr. PhomYc', phomYd', and phomYe are responsible for the biosynthesis of 2,3-dehydroisoleucine (dIle), 2,3-dehydroaspartic acid (dAsp), and 3,4-dehydroproline (dPro), respectively. While dIle formation by phomYc' is indispensable for the installation of dAsp by phomYd', the order of the other PTMs have not been elucidated yet. Most of the biosynthetic enzymes likely have broad substrate specificity, and thus, there might be a metabolic grid from a precursor to phomopsin A. The enzyme(s) responsible for the biosynthesis of 3,4-dehydrovaline (dVal) have also not been identified yet. Finally, phomM' acts as an S-adenosylmethionine-dependent alpha-N-methyltransferase that catalyzes two successive N-methylation reactions, converting N-desmethyl-phomopsin A to phomopsin A and phomopsin A further to an N,N-dimethylated congener called phomopsin E. This chain is UstYa family oxidase phomYd', found in Diaporthe leptostromiformis (Lupinosis disease fungus).